A 461-amino-acid chain; its full sequence is Siroheme synthase (461 aa).

The interval 1-204 (MRYLPLFVYL…GNFRKANRVI (204 aa)) is precorrin-2 dehydrogenase /sirohydrochlorin ferrochelatase. Residues 22 to 23 (IV) and 43 to 44 (KT) each bind NAD(+). Position 128 is a phosphoserine (Ser128). A uroporphyrinogen-III C-methyltransferase region spans residues 218 to 461 (GSVSLVGAGP…HNEISWFGNG (244 aa)). Residue Pro227 coordinates S-adenosyl-L-methionine. The Proton acceptor role is filled by Asp250. Lys272 (proton donor) is an active-site residue. S-adenosyl-L-methionine is bound by residues 303 to 305 (GGD), Ile308, Met386, and Gly415.

In the N-terminal section; belongs to the precorrin-2 dehydrogenase / sirohydrochlorin ferrochelatase family. It in the C-terminal section; belongs to the precorrin methyltransferase family.

It carries out the reaction uroporphyrinogen III + 2 S-adenosyl-L-methionine = precorrin-2 + 2 S-adenosyl-L-homocysteine + H(+). The enzyme catalyses precorrin-2 + NAD(+) = sirohydrochlorin + NADH + 2 H(+). It catalyses the reaction siroheme + 2 H(+) = sirohydrochlorin + Fe(2+). It participates in cofactor biosynthesis; adenosylcobalamin biosynthesis; precorrin-2 from uroporphyrinogen III: step 1/1. The protein operates within cofactor biosynthesis; adenosylcobalamin biosynthesis; sirohydrochlorin from precorrin-2: step 1/1. It functions in the pathway porphyrin-containing compound metabolism; siroheme biosynthesis; precorrin-2 from uroporphyrinogen III: step 1/1. Its pathway is porphyrin-containing compound metabolism; siroheme biosynthesis; siroheme from sirohydrochlorin: step 1/1. It participates in porphyrin-containing compound metabolism; siroheme biosynthesis; sirohydrochlorin from precorrin-2: step 1/1. Its function is as follows. Multifunctional enzyme that catalyzes the SAM-dependent methylations of uroporphyrinogen III at position C-2 and C-7 to form precorrin-2 via precorrin-1. Then it catalyzes the NAD-dependent ring dehydrogenation of precorrin-2 to yield sirohydrochlorin. Finally, it catalyzes the ferrochelation of sirohydrochlorin to yield siroheme. The polypeptide is Siroheme synthase (Blochmanniella floridana).